The chain runs to 140 residues: L-fucose mutarotase (140 aa).

Histidine 22 acts as the Proton donor in catalysis. Residues aspartate 30, arginine 107, and 129–131 (YGN) each bind substrate.

Belongs to the RbsD / FucU family. FucU mutarotase subfamily. Homodecamer.

Its subcellular location is the cytoplasm. The enzyme catalyses alpha-L-fucose = beta-L-fucose. Its pathway is carbohydrate metabolism; L-fucose metabolism. Involved in the anomeric conversion of L-fucose. This chain is L-fucose mutarotase, found in Salmonella gallinarum (strain 287/91 / NCTC 13346).